Consider the following 105-residue polypeptide: U7-hexatoxin-Hi1a (105 aa).

The N-terminal stretch at 1–23 (MKTILLFLGVCAVGASMMTGGWT) is a signal peptide.

Belongs to the cystatin family. In terms of processing, contains 2 disulfide bonds. As to expression, expressed by the venom gland.

It localises to the secreted. Functionally, inhibits various C1 cysteine proteases. This protein has no toxic activity and its function in the venom is unknown. It may play a role as a housekeeping or regulatory protein. The protein is U7-hexatoxin-Hi1a of Hadronyche infensa (Fraser island funnel-web spider).